A 573-amino-acid chain; its full sequence is Phosphoenolpyruvate-protein phosphotransferase (573 aa).

The active-site Tele-phosphohistidine intermediate is the His-190. Residues Arg-297 and Arg-333 each coordinate substrate. Mg(2+) contacts are provided by Glu-432 and Asp-456. 455 to 456 (ND) serves as a coordination point for phosphoenolpyruvate. Arg-466 contributes to the substrate binding site. The Proton donor role is filled by Cys-503.

It belongs to the PEP-utilizing enzyme family. Homodimer. Mg(2+) serves as cofactor.

It localises to the cytoplasm. It catalyses the reaction L-histidyl-[protein] + phosphoenolpyruvate = N(pros)-phospho-L-histidyl-[protein] + pyruvate. In terms of biological role, general (non sugar-specific) component of the phosphoenolpyruvate-dependent sugar phosphotransferase system (sugar PTS). This major carbohydrate active-transport system catalyzes the phosphorylation of incoming sugar substrates concomitantly with their translocation across the cell membrane. Enzyme I transfers the phosphoryl group from phosphoenolpyruvate (PEP) to the phosphoryl carrier protein (HPr). The polypeptide is Phosphoenolpyruvate-protein phosphotransferase (ptsI) (Staphylococcus carnosus (strain TM300)).